A 167-amino-acid chain; its full sequence is Cyclic pyranopterin monophosphate synthase 2 (167 aa).

The disordered stretch occupies residues methionine 1 to alanine 23. A compositionally biased stretch (basic and acidic residues) spans arginine 11–alanine 23. Residues leucine 86–histidine 88 and methionine 122–glutamate 123 contribute to the substrate site. The active site involves aspartate 137.

Belongs to the MoaC family. As to quaternary structure, homohexamer; trimer of dimers.

It carries out the reaction (8S)-3',8-cyclo-7,8-dihydroguanosine 5'-triphosphate = cyclic pyranopterin phosphate + diphosphate. Its pathway is cofactor biosynthesis; molybdopterin biosynthesis. Functionally, catalyzes the conversion of (8S)-3',8-cyclo-7,8-dihydroguanosine 5'-triphosphate to cyclic pyranopterin monophosphate (cPMP). In Mycobacterium bovis (strain ATCC BAA-935 / AF2122/97), this protein is Cyclic pyranopterin monophosphate synthase 2 (moaC2).